A 435-amino-acid polypeptide reads, in one-letter code: Enolase (435 aa).

2 residues coordinate substrate: His155 and Glu164. Glu205 functions as the Proton donor in the catalytic mechanism. Residues Asp243, Glu292, and Asp319 each coordinate Mg(2+). Residues Glu292, Asp319, Lys344, Ser371–Ser374, and Lys395 contribute to the substrate site. Lys344 (proton acceptor) is an active-site residue.

Belongs to the enolase family. In terms of assembly, homooctamer. It depends on Mg(2+) as a cofactor.

Its subcellular location is the cytoplasm. The protein localises to the secreted. It localises to the cell surface. The catalysed reaction is (2R)-2-phosphoglycerate = phosphoenolpyruvate + H2O. Its pathway is carbohydrate degradation; glycolysis; pyruvate from D-glyceraldehyde 3-phosphate: step 4/5. In terms of biological role, catalyzes the reversible conversion of 2-phosphoglycerate (2-PG) into phosphoenolpyruvate (PEP). It is essential for the degradation of carbohydrates via glycolysis. Its function is as follows. 'Moonlights' as a plasminogen receptor and plasmin activator. Binds host (human) plasminogen in vitro; enhances the activity of host tissue-specific plasminogen activator (tPA). The polypeptide is Enolase (Streptococcus pyogenes serotype M1).